We begin with the raw amino-acid sequence, 163 residues long: 2-C-methyl-D-erythritol 2,4-cyclodiphosphate synthase (163 aa).

The a divalent metal cation site is built by Asp-10 and His-12. Residues 10 to 12 and 36 to 37 contribute to the 4-CDP-2-C-methyl-D-erythritol 2-phosphate site; these read DVH and HS. His-44 is an a divalent metal cation binding site. 4-CDP-2-C-methyl-D-erythritol 2-phosphate-binding positions include 58 to 60, 63 to 67, 134 to 137, Phe-141, and Arg-144; these read DIG, FPDND, and TTTE.

The protein belongs to the IspF family. Homotrimer. Requires a divalent metal cation as cofactor.

The enzyme catalyses 4-CDP-2-C-methyl-D-erythritol 2-phosphate = 2-C-methyl-D-erythritol 2,4-cyclic diphosphate + CMP. It functions in the pathway isoprenoid biosynthesis; isopentenyl diphosphate biosynthesis via DXP pathway; isopentenyl diphosphate from 1-deoxy-D-xylulose 5-phosphate: step 4/6. Involved in the biosynthesis of isopentenyl diphosphate (IPP) and dimethylallyl diphosphate (DMAPP), two major building blocks of isoprenoid compounds. Catalyzes the conversion of 4-diphosphocytidyl-2-C-methyl-D-erythritol 2-phosphate (CDP-ME2P) to 2-C-methyl-D-erythritol 2,4-cyclodiphosphate (ME-CPP) with a corresponding release of cytidine 5-monophosphate (CMP). This is 2-C-methyl-D-erythritol 2,4-cyclodiphosphate synthase from Carboxydothermus hydrogenoformans (strain ATCC BAA-161 / DSM 6008 / Z-2901).